Consider the following 61-residue polypeptide: Small ribosomal subunit protein uS14 (61 aa).

Zn(2+) contacts are provided by Cys24, Cys27, Cys40, and Cys43.

Belongs to the universal ribosomal protein uS14 family. Zinc-binding uS14 subfamily. Part of the 30S ribosomal subunit. Contacts proteins S3 and S10. Requires Zn(2+) as cofactor.

Functionally, binds 16S rRNA, required for the assembly of 30S particles and may also be responsible for determining the conformation of the 16S rRNA at the A site. This Clostridium acetobutylicum (strain ATCC 824 / DSM 792 / JCM 1419 / IAM 19013 / LMG 5710 / NBRC 13948 / NRRL B-527 / VKM B-1787 / 2291 / W) protein is Small ribosomal subunit protein uS14.